We begin with the raw amino-acid sequence, 393 residues long: NAD(P)H-quinone oxidoreductase subunit H, chloroplastic (393 aa).

Belongs to the complex I 49 kDa subunit family. NDH is composed of at least 16 different subunits, 5 of which are encoded in the nucleus.

It is found in the plastid. The protein resides in the chloroplast thylakoid membrane. The enzyme catalyses a plastoquinone + NADH + (n+1) H(+)(in) = a plastoquinol + NAD(+) + n H(+)(out). It carries out the reaction a plastoquinone + NADPH + (n+1) H(+)(in) = a plastoquinol + NADP(+) + n H(+)(out). Functionally, NDH shuttles electrons from NAD(P)H:plastoquinone, via FMN and iron-sulfur (Fe-S) centers, to quinones in the photosynthetic chain and possibly in a chloroplast respiratory chain. The immediate electron acceptor for the enzyme in this species is believed to be plastoquinone. Couples the redox reaction to proton translocation, and thus conserves the redox energy in a proton gradient. In Anthoceros angustus (Hornwort), this protein is NAD(P)H-quinone oxidoreductase subunit H, chloroplastic.